The chain runs to 305 residues: GTPase Era (305 aa).

The region spanning 13–181 (RCGFVAIVGR…ESAVGRFLPE (169 aa)) is the Era-type G domain. Positions 21-28 (GRPNVGKS) are G1. 21–28 (GRPNVGKS) lines the GTP pocket. Residues 47–51 (QTTRH) are G2. The tract at residues 68 to 71 (DTPG) is G3. GTP contacts are provided by residues 68 to 72 (DTPGM) and 130 to 133 (NKVD). The interval 130-133 (NKVD) is G4. Residues 160–162 (LSA) form a G5 region. The 85-residue stretch at 204 to 288 (VREKITRQLG…MLRLWVKVKR (85 aa)) folds into the KH type-2 domain.

Belongs to the TRAFAC class TrmE-Era-EngA-EngB-Septin-like GTPase superfamily. Era GTPase family. Monomer.

It localises to the cytoplasm. The protein resides in the cell inner membrane. An essential GTPase that binds both GDP and GTP, with rapid nucleotide exchange. Plays a role in 16S rRNA processing and 30S ribosomal subunit biogenesis and possibly also in cell cycle regulation and energy metabolism. This is GTPase Era from Marinobacter nauticus (strain ATCC 700491 / DSM 11845 / VT8) (Marinobacter aquaeolei).